Consider the following 1496-residue polypeptide: Chromosome partition protein MukB (1496 aa).

63-70 (GGNGAGKS) contributes to the ATP binding site. 2 coiled-coil regions span residues 328 to 493 (KLEL…QRLS) and 536 to 632 (KMQA…APAW). Residues 694 to 811 (PDGSDDVRLN…EVPLFGRAAR (118 aa)) are flexible hinge. Coiled-coil stretches lie at residues 861 to 1171 (NPEE…SAEE) and 1235 to 1291 (IDAI…LQNI). Over residues 1082–1091 (RARSRRDELQ) the composition is skewed to basic and acidic residues. The tract at residues 1082–1101 (RARSRRDELQQRLSQQRSRK) is disordered.

This sequence belongs to the SMC family. MukB subfamily. In terms of assembly, homodimerization via its hinge domain. Binds to DNA via its C-terminal region. Interacts, and probably forms a ternary complex, with MukE and MukF via its C-terminal region. The complex formation is stimulated by calcium or magnesium. Interacts with tubulin-related protein FtsZ.

It localises to the cytoplasm. Its subcellular location is the nucleoid. Functionally, plays a central role in chromosome condensation, segregation and cell cycle progression. Functions as a homodimer, which is essential for chromosome partition. Involved in negative DNA supercoiling in vivo, and by this means organize and compact chromosomes. May achieve or facilitate chromosome segregation by condensation DNA from both sides of a centrally located replisome during cell division. This Actinobacillus pleuropneumoniae serotype 7 (strain AP76) protein is Chromosome partition protein MukB.